We begin with the raw amino-acid sequence, 393 residues long: Myb-related transcription factor, partner of profilin (393 aa).

Over residues 1–11 (MASATAAAAPG) the composition is skewed to low complexity. The disordered stretch occupies residues 1–21 (MASATAAAAPGEAEETTRLRK). The Myb-like domain occupies 16–88 (TTRLRKPRFS…EVQKRWNDFK (73 aa)). The Nuclear localization signal signature appears at 87 to 90 (FKRR). 3 disordered regions span residues 125–254 (GPGV…EQSL), 290–323 (PLLP…APKV), and 348–393 (IISP…WKSP). The span at 142-157 (AAASSQPQASTASTQR) shows a compositional bias: low complexity. The segment covering 160–171 (LSEDRRQDRRAD) has biased composition (basic and acidic residues). The segment covering 173–184 (PAQSKGGSSSPE) has biased composition (polar residues). Composition is skewed to pro residues over residues 219 to 229 (PPLPAPPPPPT), 238 to 247 (SPSPTPPRPT), 296 to 320 (PADP…PPSA), and 359 to 368 (KPLPPAPPLP). Basic residues predominate over residues 375-393 (HKRRKGFPTRKRRGRWKSP). Short sequence motifs (nuclear localization signal) lie at residues 376-379 (KRRK) and 384-387 (RKRR).

In terms of assembly, interacts with PFN1. Homodimer and heterodimer with PFN1. In terms of tissue distribution, ubiquitous. Highly expressed in brain, liver and testis. Moderate expression in heart, lung and skeletal muscle. Low expression in spleen and kidney.

It localises to the nucleus. Its function is as follows. Transcriptional repressor; DNA-binding protein that specifically recognizes the core sequence 5'-YAAC[GT]G-3'. Dimerization with PFN1 reduces its DNA-binding capacity. This is Myb-related transcription factor, partner of profilin (Mypop) from Mus musculus (Mouse).